A 238-amino-acid polypeptide reads, in one-letter code: Probable succinyl-CoA:3-ketoacid coenzyme A transferase subunit A (238 aa).

CoA is bound at residue 24–30 (GGFGLCG).

Belongs to the 3-oxoacid CoA-transferase subunit A family. As to quaternary structure, heterodimer of a subunit A and a subunit B.

It carries out the reaction a 3-oxo acid + succinyl-CoA = a 3-oxoacyl-CoA + succinate. The polypeptide is Probable succinyl-CoA:3-ketoacid coenzyme A transferase subunit A (scoA) (Bacillus subtilis (strain 168)).